The following is a 65-amino-acid chain: Large ribosomal subunit protein bL35 (65 aa).

This sequence belongs to the bacterial ribosomal protein bL35 family.

This is Large ribosomal subunit protein bL35 from Blochmanniella pennsylvanica (strain BPEN).